The sequence spans 821 residues: Kinetochore protein SLK19 (821 aa).

2 disordered regions span residues 1–52 and 99–153; these read MNEV…SQFV and FDDK…NDKE. Thr7 carries the phosphothreonine; by CDC28 modification. The span at 15–51 shows a compositional bias: polar residues; the sequence is QAQQREQNSENCSQERNPRTFNSEPDSSFNSPGSSQF. 2 stretches are compositionally biased toward basic and acidic residues: residues 99-122 and 136-153; these read FDDKKSDSGTNDDKGGASTSDKHV and SSEKRSDKNVDVDENDKE. 2 positions are modified to phosphoserine: Ser188 and Ser189. Ser201 carries the post-translational modification Phosphoserine; by CDC28. Ser216 is modified (phosphoserine). The residue at position 273 (Thr273) is a Phosphothreonine. Disordered stretches follow at residues 274-298 and 699-720; these read PLYETSARESNSNEEGRNDYDDDNQ and EQNNNNNNSVTLSNDQKDRDDE. A Phosphoserine modification is found at Ser283. The stretch at 310–821 forms a coiled coil; the sequence is AKRNEELTDQ…LLKLLENEKK (512 aa).

Cleaved by ESP1 at the onset of anaphase. In terms of processing, phosphorylated by CDC5/Polo-like kinase at the onset of anaphase. Phosphorylation takes places at proximity to cleavage sites and is required for an efficient cleavage by ESP1. Phosphorylated also by CDC28.

It is found in the chromosome. Its subcellular location is the centromere. The protein localises to the kinetochore. The protein resides in the cytoplasm. It localises to the cytoskeleton. It is found in the microtubule organizing center. Its subcellular location is the spindle pole body. Its function is as follows. Has a role in spindle assembly and stability. Required to ensure a timely exit form mitosis. Essential to maintain pre-anaphase spindle polarity. Associates to the plus ends of the microtubules at the kinetochore and spindle midzone. A component of the FEAR (CDC14 Early Anaphase Release) network which promotes CDC14 release from the nucleolus during early anaphase. Required for proper chromosome segregation during meiosis I where it prevents premature sister chromatid separation. This chain is Kinetochore protein SLK19 (SLK19), found in Saccharomyces cerevisiae (strain ATCC 204508 / S288c) (Baker's yeast).